Consider the following 274-residue polypeptide: Large ribosomal subunit protein uL2 (274 aa).

Positions 224-256 (AMNPIDHPHGGGEGRTGEGRHAVDPWGNLTKGY) are disordered. The segment covering 229–246 (DHPHGGGEGRTGEGRHAV) has biased composition (basic and acidic residues).

It belongs to the universal ribosomal protein uL2 family. Part of the 50S ribosomal subunit. Forms a bridge to the 30S subunit in the 70S ribosome.

One of the primary rRNA binding proteins. Required for association of the 30S and 50S subunits to form the 70S ribosome, for tRNA binding and peptide bond formation. It has been suggested to have peptidyltransferase activity; this is somewhat controversial. Makes several contacts with the 16S rRNA in the 70S ribosome. The protein is Large ribosomal subunit protein uL2 of Acidovorax sp. (strain JS42).